Here is a 231-residue protein sequence, read N- to C-terminus: 7-cyano-7-deazaguanine synthase (231 aa).

8 to 18 is a binding site for ATP; sequence FSGGQDSTTCL. The Zn(2+) site is built by Cys-188, Cys-197, Cys-200, and Cys-203.

Belongs to the QueC family. Zn(2+) is required as a cofactor.

It carries out the reaction 7-carboxy-7-deazaguanine + NH4(+) + ATP = 7-cyano-7-deazaguanine + ADP + phosphate + H2O + H(+). Its pathway is purine metabolism; 7-cyano-7-deazaguanine biosynthesis. Functionally, catalyzes the ATP-dependent conversion of 7-carboxy-7-deazaguanine (CDG) to 7-cyano-7-deazaguanine (preQ(0)). The polypeptide is 7-cyano-7-deazaguanine synthase (Salmonella gallinarum (strain 287/91 / NCTC 13346)).